A 306-amino-acid chain; its full sequence is Uracil-DNA glycosylase (306 aa).

Residues 1–25 (MIGQKTLYSFFSPTPTGKRTTRSPE) are interaction with FAM72A. The interval 11–31 (FSPTPTGKRTTRSPEPVPGSG) is disordered. A Phosphoserine modification is found at Ser12. The Important for nuclear sorting signature appears at 17–19 (GKR). Phosphoserine occurs at positions 23, 43, and 57. Positions 66–81 (RIQRNKAAALLRLAAR) are interaction with RPA2. A uracil-binding site is contributed by Gln146. Residue Asp147 is the Proton acceptor of the active site. Residue His150 participates in dsDNA binding. Phe160 is a uracil binding site. A dsDNA-binding site is contributed by Ser171. Asn206 provides a ligand contact to uracil. Ser249, His270, Ser272, and Arg278 together coordinate dsDNA. Residue His270 coordinates uracil. The residue at position 288 (Lys288) is an N6-acetyllysine.

Belongs to the uracil-DNA glycosylase (UDG) superfamily. UNG family. Interacts with RPA2 subunit of the RPA trimer; this interaction mediates UNG2 recruitment to RPA-coated single-stranded DNA at stalled replication forks. Interacts with PCNA; this interaction mediates UNG2 recruitment to S-phase replication foci. Interacts (via N-terminus) with FAM72A. Post-translationally, processed by cleavage of a transit peptide.

The protein resides in the mitochondrion. It localises to the nucleus. It carries out the reaction Hydrolyzes single-stranded DNA or mismatched double-stranded DNA and polynucleotides, releasing free uracil.. The enzyme catalyses a 2'-deoxyuridine in single-stranded DNA + H2O = a 2'-deoxyribose 5'-monophosphate in single-stranded DNA + uracil. The catalysed reaction is a 2'-deoxyuridine in double-stranded DNA + H2O = a 2'-deoxyribose 5'-monophosphate in double-stranded DNA + uracil. Uracil-DNA glycosylase that hydrolyzes the N-glycosidic bond between uracil and deoxyribose in single- and double-stranded DNA (ssDNA and dsDNA) to release a free uracil residue and form an abasic (apurinic/apyrimidinic; AP) site. Excises uracil residues arising as a result of misincorporation of dUMP residues by DNA polymerase during replication or due to spontaneous or enzymatic deamination of cytosine. Mediates error-free base excision repair (BER) of uracil at replication forks. According to the model, it is recruited by PCNA to S-phase replication forks to remove misincorporated uracil at U:A base mispairs in nascent DNA strands. Via trimeric RPA it is recruited to ssDNA stretches ahead of the polymerase to allow detection and excision of deaminated cytosines prior to replication. The resultant AP sites temporarily stall replication, allowing time to repair the lesion. Mediates mutagenic uracil processing involved in antibody affinity maturation. Processes AICDA-induced U:G base mispairs at variable Ig regions leading to the generation of transversion mutations. Additionally, it operates at switch sites of Ig constant regions where it mediates Ig isotype class switch recombination. Excises AICDA-induced uracil residues forming AP sites that are subsequently nicked by APEX1 endonuclease. The accumulation of staggered nicks in opposite strands results in double strand DNA breaks that are finally resolved via non-homologous end joining repair pathway. In Mus musculus (Mouse), this protein is Uracil-DNA glycosylase (Ung).